We begin with the raw amino-acid sequence, 375 residues long: DNA replication and repair protein RecF (375 aa).

Position 30–37 (30–37) interacts with ATP; sequence GENAQGKT.

Belongs to the RecF family.

It is found in the cytoplasm. Functionally, the RecF protein is involved in DNA metabolism; it is required for DNA replication and normal SOS inducibility. RecF binds preferentially to single-stranded, linear DNA. It also seems to bind ATP. In Bacillus cereus (strain G9842), this protein is DNA replication and repair protein RecF.